We begin with the raw amino-acid sequence, 156 residues long: Small ribosomal subunit protein uS7 (156 aa).

The protein belongs to the universal ribosomal protein uS7 family. As to quaternary structure, part of the 30S ribosomal subunit. Contacts proteins S9 and S11.

Functionally, one of the primary rRNA binding proteins, it binds directly to 16S rRNA where it nucleates assembly of the head domain of the 30S subunit. Is located at the subunit interface close to the decoding center, probably blocks exit of the E-site tRNA. This is Small ribosomal subunit protein uS7 from Trichlorobacter lovleyi (strain ATCC BAA-1151 / DSM 17278 / SZ) (Geobacter lovleyi).